The sequence spans 539 residues: Putative cysteine ligase BshC (539 aa).

A coiled-coil region spans residues 249–270 (VETNDEVTNRLNESQAAMKRAG).

The protein belongs to the BshC family.

In terms of biological role, involved in bacillithiol (BSH) biosynthesis. May catalyze the last step of the pathway, the addition of cysteine to glucosamine malate (GlcN-Mal) to generate BSH. This chain is Putative cysteine ligase BshC, found in Bacillus pumilus (strain SAFR-032).